The primary structure comprises 360 residues: Photosystem II protein D1 1 (360 aa).

Helical transmembrane passes span 29 to 46 (YVGW…SATI), 118 to 133 (HFLI…EWEL), and 142 to 156 (WICI…AAAA). His118 is a binding site for chlorophyll a. Residue Tyr126 coordinates pheophytin a. Residues Asp170 and Glu189 each contribute to the [CaMn4O5] cluster site. A helical membrane pass occupies residues 197–218 (FHMLGVAGVFGGSLFSAMHGSL). His198 is a chlorophyll a binding site. A quinone is bound by residues His215 and 264 to 265 (SF). His215 contributes to the Fe cation binding site. Residue His272 participates in Fe cation binding. A helical membrane pass occupies residues 274-288 (FLAAWPVIGIWFTAL). Positions 332, 333, 342, and 344 each coordinate [CaMn4O5] cluster. Residues 345-360 (GTESAPVAVGNADLNG) constitute a propeptide that is removed on maturation.

It belongs to the reaction center PufL/M/PsbA/D family. As to quaternary structure, PSII is composed of 1 copy each of membrane proteins PsbA, PsbB, PsbC, PsbD, PsbE, PsbF, PsbH, PsbI, PsbJ, PsbK, PsbL, PsbM, PsbT, PsbX, Psb30/Ycf12, peripheral proteins PsbO, CyanoQ (PsbQ), PsbU, PsbV and a large number of cofactors. It forms dimeric complexes. Requires The D1/D2 heterodimer binds P680, chlorophylls that are the primary electron donor of PSII, and subsequent electron acceptors. It shares a non-heme iron and each subunit binds pheophytin, quinone, additional chlorophylls, carotenoids and lipids. D1 provides most of the ligands for the Mn4-Ca-O5 cluster of the oxygen-evolving complex (OEC). There is also a Cl(-1) ion associated with D1 and D2, which is required for oxygen evolution. The PSII complex binds additional chlorophylls, carotenoids and specific lipids. as cofactor. Tyr-161 forms a radical intermediate that is referred to as redox-active TyrZ, YZ or Y-Z. Post-translationally, C-terminally processed by CtpA; processing is essential to allow assembly of the oxygen-evolving complex and thus photosynthetic growth.

Its subcellular location is the cell inner membrane. It carries out the reaction 2 a plastoquinone + 4 hnu + 2 H2O = 2 a plastoquinol + O2. Functionally, photosystem II (PSII) is a light-driven water:plastoquinone oxidoreductase that uses light energy to abstract electrons from H(2)O, generating O(2) and a proton gradient subsequently used for ATP formation. It consists of a core antenna complex that captures photons, and an electron transfer chain that converts photonic excitation into a charge separation. The D1/D2 (PsbA/PsbD) reaction center heterodimer binds P680, the primary electron donor of PSII as well as several subsequent electron acceptors. The polypeptide is Photosystem II protein D1 1 (Gloeobacter violaceus (strain ATCC 29082 / PCC 7421)).